Consider the following 155-residue polypeptide: Plastocyanin, chloroplastic (155 aa).

The transit peptide at 1–58 (MAALSSAAVSVPSFAAATPMRSSRSSRMVVRASLGKKAASAAVAMAAGAMLLGGSAMA) directs the protein to the chloroplast. The Plastocyanin-like domain occupies 59 to 155 (QDVLLGANGG…AGMVGKVTVN (97 aa)). Cu cation is bound by residues H95, C140, H143, and M148.

Belongs to the plastocyanin family. Cu(2+) is required as a cofactor.

Its subcellular location is the plastid. It is found in the chloroplast thylakoid membrane. In terms of biological role, participates in electron transfer between P700 and the cytochrome b6-f complex in photosystem I. This is Plastocyanin, chloroplastic (PETE) from Hordeum vulgare (Barley).